We begin with the raw amino-acid sequence, 114 residues long: Non-specific lipid-transfer protein 1 (114 aa).

Residues 1–23 form the signal peptide; that stretch reads MEMVSKIACFVLLCMVVVAPHAE. 4 cysteine pairs are disulfide-bonded: C27-C73, C37-C50, C51-C96, and C71-C110.

This sequence belongs to the plant LTP family.

Plant non-specific lipid-transfer proteins transfer phospholipids as well as galactolipids across membranes. May play a role in wax or cutin deposition in the cell walls of expanding epidermal cells and certain secretory tissues. This Solanum lycopersicum (Tomato) protein is Non-specific lipid-transfer protein 1 (TSW12).